The following is a 102-amino-acid chain: Small ribosomal subunit protein uS10 (102 aa).

It belongs to the universal ribosomal protein uS10 family. In terms of assembly, part of the 30S ribosomal subunit.

Its function is as follows. Involved in the binding of tRNA to the ribosomes. The chain is Small ribosomal subunit protein uS10 from Bartonella tribocorum (strain CIP 105476 / IBS 506).